We begin with the raw amino-acid sequence, 110 residues long: Early E3B 12.7 kDa protein (110 aa).

Residues 1-16 (MKTALVLFFMLIPVWA) form the signal peptide. The chain crosses the membrane as a helical span at residues 37 to 57 (YIGWVYGIMSGLVFVSSVVSL).

It belongs to the adenoviridae E3_14 family. In terms of processing, phosphorylated on serine; O-glycosylated, but not N-glycosylated.

It localises to the host membrane. Functionally, down-regulates the EGF receptor and prevents cytolysis by TNF. The protein is Early E3B 12.7 kDa protein of Homo sapiens (Human).